An 834-amino-acid polypeptide reads, in one-letter code: Periplasmic nitrate reductase (834 aa).

Residues 1–31 (MSSELTRRNLLKAHAAGIAAATAGIALPAAA) constitute a signal peptide (tat-type signal). The 4Fe-4S Mo/W bis-MGD-type domain occupies 43–99 (IKWSKAPCRFCGTGCGVMVGVKEGKVVATHGDMQAEVNRGLNCIKGYFLSKIMYGKD). Positions 50, 53, 57, and 85 each coordinate [4Fe-4S] cluster. Mo-bis(molybdopterin guanine dinucleotide) contacts are provided by residues Lys87, Gln154, Asn179, Cys183, 216-223 (WGSNMAEM), 247-251 (STFTH), 266-268 (GTD), Met377, Gln381, Asn487, 513-514 (SD), Lys536, Asp563, and 723-732 (TGRVLEHWHS). Trp799 contacts substrate. Mo-bis(molybdopterin guanine dinucleotide) is bound by residues Asn807 and Lys824.

This sequence belongs to the prokaryotic molybdopterin-containing oxidoreductase family. NasA/NapA/NarB subfamily. As to quaternary structure, component of the periplasmic nitrate reductase NapAB complex composed of NapA and NapB. Requires [4Fe-4S] cluster as cofactor. Mo-bis(molybdopterin guanine dinucleotide) serves as cofactor. Post-translationally, predicted to be exported by the Tat system. The position of the signal peptide cleavage has not been experimentally proven.

It is found in the periplasm. It carries out the reaction 2 Fe(II)-[cytochrome] + nitrate + 2 H(+) = 2 Fe(III)-[cytochrome] + nitrite + H2O. Its function is as follows. Catalytic subunit of the periplasmic nitrate reductase complex NapAB. Receives electrons from NapB and catalyzes the reduction of nitrate to nitrite. The chain is Periplasmic nitrate reductase from Agrobacterium fabrum (strain C58 / ATCC 33970) (Agrobacterium tumefaciens (strain C58)).